Here is a 150-residue protein sequence, read N- to C-terminus: uncharacterized protein (150 aa).

Residues 4-148 (LILYKSIHHK…KAKEFAKSIL (145 aa)) form the Flavodoxin-like domain.

This is an uncharacterized protein from Methanocaldococcus jannaschii (strain ATCC 43067 / DSM 2661 / JAL-1 / JCM 10045 / NBRC 100440) (Methanococcus jannaschii).